The chain runs to 677 residues: uncharacterized protein (677 aa).

Residues 1-87 (MGRHSKPDPE…PTGAEPIAAA (87 aa)) are disordered. Basic and acidic residues predominate over residues 17–29 (SDGHAAEQQHWED). Residues 51 to 64 (GHYSAVGGYSASGS) show a composition bias toward low complexity. Transmembrane regions (helical) follow at residues 115 to 135 (VSIG…GVIL), 192 to 212 (VAVA…IGKW), 313 to 333 (EAVA…IGAV), and 474 to 494 (ATLA…IMLD).

The protein localises to the cell membrane. This is an uncharacterized protein from Mycobacterium tuberculosis (strain CDC 1551 / Oshkosh).